Consider the following 442-residue polypeptide: 5-methylthioadenosine/S-adenosylhomocysteine deaminase (442 aa).

Zn(2+) is bound by residues His-70 and His-72. Substrate is bound by residues Glu-99 and His-191. His-218 serves as a coordination point for Zn(2+). 2 residues coordinate substrate: Glu-221 and Asp-306. Asp-306 is a binding site for Zn(2+).

This sequence belongs to the metallo-dependent hydrolases superfamily. MTA/SAH deaminase family. Requires Zn(2+) as cofactor.

The enzyme catalyses S-adenosyl-L-homocysteine + H2O + H(+) = S-inosyl-L-homocysteine + NH4(+). The catalysed reaction is S-methyl-5'-thioadenosine + H2O + H(+) = S-methyl-5'-thioinosine + NH4(+). Its function is as follows. Catalyzes the deamination of 5-methylthioadenosine and S-adenosyl-L-homocysteine into 5-methylthioinosine and S-inosyl-L-homocysteine, respectively. Is also able to deaminate adenosine. This Nitratidesulfovibrio vulgaris (strain ATCC 29579 / DSM 644 / CCUG 34227 / NCIMB 8303 / VKM B-1760 / Hildenborough) (Desulfovibrio vulgaris) protein is 5-methylthioadenosine/S-adenosylhomocysteine deaminase.